A 110-amino-acid chain; its full sequence is Thioredoxin Asp f 29 (110 aa).

Positions 1 to 110 constitute a Thioredoxin domain; sequence MSHNVEKITD…LEAAIKAHVA (110 aa). Active-site nucleophile residues include cysteine 34 and cysteine 37. An intrachain disulfide couples cysteine 34 to cysteine 37.

This sequence belongs to the thioredoxin family.

In terms of biological role, participates in various redox reactions through the reversible oxidation of its active center dithiol to a disulfide and catalyzes dithiol-disulfide exchange reactions. The sequence is that of Thioredoxin Asp f 29 from Aspergillus fumigatus (Neosartorya fumigata).